Here is a 417-residue protein sequence, read N- to C-terminus: MTYQPKSDFMRVMMERGFLADCTDYQGLDEAMSKGVVPTYIGYDATAASLHVGHLLNIMMLRWLQKTGHKPITLMGGGTTKVGDPSFRSDERPLLGAEQIDANIAGMKQVFSSYLTYGDGPTDALMLNNAEWLDGLNYLEFLRDVGRHFSVNRMLSFESVKSRLDREQSLSFLEFNYMILQAYDFMELNRRYGCRLQMGGSDQWGNIVNGIDLTRRILDQEVYGLTSPLLTTSDGRKMGKSQGGAIWLNGDMLSPYEFWQFWRNTTDADVGRFLKLYTELPLEECDRLGALAGSEINDAKIILANAVTALLHGPEAAQAAEATAREVFEKGGAGEDLPTLTLTTDEIGDGISVVQLITRSGLAKSGKEAKRLIAENGAKLDDAPLTDAGLMIDADRLAAPIKLSAGRKRHALIKRAD.

Tyr-40 provides a ligand contact to L-tyrosine. A 'HIGH' region motif is present at residues 45–54 (ATAASLHVGH). Residues Tyr-177 and Gln-181 each coordinate L-tyrosine. The short motif at 237 to 241 (KMGKS) is the 'KMSKS' region element. Residue Lys-240 participates in ATP binding. In terms of domain architecture, S4 RNA-binding spans 351 to 414 (ISVVQLITRS…AGRKRHALIK (64 aa)).

The protein belongs to the class-I aminoacyl-tRNA synthetase family. TyrS type 1 subfamily. In terms of assembly, homodimer.

It localises to the cytoplasm. The enzyme catalyses tRNA(Tyr) + L-tyrosine + ATP = L-tyrosyl-tRNA(Tyr) + AMP + diphosphate + H(+). Its function is as follows. Catalyzes the attachment of tyrosine to tRNA(Tyr) in a two-step reaction: tyrosine is first activated by ATP to form Tyr-AMP and then transferred to the acceptor end of tRNA(Tyr). The chain is Tyrosine--tRNA ligase from Dinoroseobacter shibae (strain DSM 16493 / NCIMB 14021 / DFL 12).